Here is a 194-residue protein sequence, read N- to C-terminus: Molybdenum cofactor guanylyltransferase (194 aa).

GTP-binding positions include 12–14 (LAG), K25, N53, D71, and D101. D101 is a Mg(2+) binding site.

Belongs to the MobA family. As to quaternary structure, monomer. Requires Mg(2+) as cofactor.

Its subcellular location is the cytoplasm. The enzyme catalyses Mo-molybdopterin + GTP + H(+) = Mo-molybdopterin guanine dinucleotide + diphosphate. Transfers a GMP moiety from GTP to Mo-molybdopterin (Mo-MPT) cofactor (Moco or molybdenum cofactor) to form Mo-molybdopterin guanine dinucleotide (Mo-MGD) cofactor. The polypeptide is Molybdenum cofactor guanylyltransferase (Escherichia coli O6:H1 (strain CFT073 / ATCC 700928 / UPEC)).